Here is a 72-residue protein sequence, read N- to C-terminus: Hypertrehalosaemic prohormone (72 aa).

The first 21 residues, 1–21 (MNHLVKVLIVVVAIALVLCEA), serve as a signal peptide directing secretion. Pyrrolidone carboxylic acid is present on Gln22. Position 31 is a threonine amide (Thr31).

The protein belongs to the AKH/HRTH/RPCH family. Expressed in corpora cardiaca.

The protein resides in the secreted. In terms of biological role, hypertrehalosaemic factors are neuropeptides that elevate the level of trehalose in the hemolymph (trehalose is the major carbohydrate in the hemolymph of insects). This chain is Hypertrehalosaemic prohormone, found in Blaberus discoidalis (Tropical cockroach).